The chain runs to 447 residues: Tubulin beta-1 chain (447 aa).

Residues glutamine 11, glutamate 69, serine 138, glycine 142, threonine 143, glycine 144, asparagine 204, and asparagine 226 each coordinate GTP. Glutamate 69 contacts Mg(2+).

This sequence belongs to the tubulin family. As to quaternary structure, dimer of alpha and beta chains. A typical microtubule is a hollow water-filled tube with an outer diameter of 25 nm and an inner diameter of 15 nM. Alpha-beta heterodimers associate head-to-tail to form protofilaments running lengthwise along the microtubule wall with the beta-tubulin subunit facing the microtubule plus end conferring a structural polarity. Microtubules usually have 13 protofilaments but different protofilament numbers can be found in some organisms and specialized cells. Mg(2+) is required as a cofactor.

It localises to the cytoplasm. It is found in the cytoskeleton. Functionally, tubulin is the major constituent of microtubules, a cylinder consisting of laterally associated linear protofilaments composed of alpha- and beta-tubulin heterodimers. Microtubules grow by the addition of GTP-tubulin dimers to the microtubule end, where a stabilizing cap forms. Below the cap, tubulin dimers are in GDP-bound state, owing to GTPase activity of alpha-tubulin. This chain is Tubulin beta-1 chain (benA), found in Emericella nidulans (strain FGSC A4 / ATCC 38163 / CBS 112.46 / NRRL 194 / M139) (Aspergillus nidulans).